We begin with the raw amino-acid sequence, 187 residues long: UPF0301 protein LPC_2717 (187 aa).

The protein belongs to the UPF0301 (AlgH) family.

The protein is UPF0301 protein LPC_2717 of Legionella pneumophila (strain Corby).